The following is a 94-amino-acid chain: Putative pterin-4-alpha-carbinolamine dehydratase (94 aa).

This sequence belongs to the pterin-4-alpha-carbinolamine dehydratase family.

The catalysed reaction is (4aS,6R)-4a-hydroxy-L-erythro-5,6,7,8-tetrahydrobiopterin = (6R)-L-erythro-6,7-dihydrobiopterin + H2O. The polypeptide is Putative pterin-4-alpha-carbinolamine dehydratase (Koribacter versatilis (strain Ellin345)).